The following is a 132-amino-acid chain: DNA-directed RNA polymerase subunit Rpo8 (132 aa).

Belongs to the archaeal Rpo8 RNA polymerase subunit family. In terms of assembly, part of the 13-subunit RNA polymerase complex.

Its subcellular location is the cytoplasm. The catalysed reaction is RNA(n) + a ribonucleoside 5'-triphosphate = RNA(n+1) + diphosphate. In terms of biological role, DNA-dependent RNA polymerase (RNAP) catalyzes the transcription of DNA into RNA using the four ribonucleoside triphosphates as substrates. This chain is DNA-directed RNA polymerase subunit Rpo8, found in Saccharolobus solfataricus (strain ATCC 35092 / DSM 1617 / JCM 11322 / P2) (Sulfolobus solfataricus).